Here is a 178-residue protein sequence, read N- to C-terminus: CASP-like protein 5A1 (178 aa).

A compositionally biased stretch (low complexity) spans 1–11 (MFASRPAVHPV). A disordered region spans residues 1–25 (MFASRPAVHPVEAPPPPDPAEQPRG). Residues 1 to 37 (MFASRPAVHPVEAPPPPDPAEQPRGVLMKDLPGMPGT) are Cytoplasmic-facing. A helical membrane pass occupies residues 38–58 (AGGLGLRLAQFAFAAVALAVM). The Extracellular segment spans residues 59 to 69 (ASTNDFPSVTS). The chain crosses the membrane as a helical span at residues 70 to 90 (FCFLVAAAILQCLWSFSLAIV). Residues 91 to 105 (DIYALLVKRCLRNRR) are Cytoplasmic-facing. A helical membrane pass occupies residues 106 to 126 (AVCLFAIGDGITAALTFSAAC). The Extracellular portion of the chain corresponds to 127-152 (ASSGITVLIDNDLDLCSENHCASFES). The helical transmembrane segment at 153–173 (ATAMAFLSWFALSPSFLLNFW) threads the bilayer. The Cytoplasmic segment spans residues 174–178 (SMASG).

Belongs to the Casparian strip membrane proteins (CASP) family. As to quaternary structure, homodimer and heterodimers.

The protein localises to the cell membrane. The chain is CASP-like protein 5A1 from Oryza sativa subsp. japonica (Rice).